The chain runs to 1011 residues: Unconventional myosin ID (1011 aa).

Positions 7–690 (AGVQDFVLLD…TLFALEHQRN (684 aa)) constitute a Myosin motor domain. Residue 100–107 (GESGAGKT) coordinates ATP. The segment at 567-589 (MADLVVTLLKKEPFYVRCIKPND) is actin-binding. IQ domains are found at residues 694–714 (PHIV…RNFK) and 716–736 (MKAA…SYVQ). The 202-residue stretch at 806–1007 (AGRRPYWGQA…EGNIIFEVPA (202 aa)) folds into the TH1 domain.

It belongs to the TRAFAC class myosin-kinesin ATPase superfamily. Myosin family. As to quaternary structure, binds to F-actin. Interacts with arm. Interacts with shg. Interacts with ds (via intracellular region). As to expression, in the embryo, expressed in gastric caeca, midgut cells of the proventriculus, and in the mid and hindgut. In the larval gut brush border, expression is in the terminal web domain. In the adult gut brush border, expression remains in the web domain and has also moved into the microvilli. Also expressed at low levels in follicle cells during oogenesis.

It localises to the cytoplasm. Its subcellular location is the cell cortex. It is found in the cytoskeleton. The protein resides in the cell membrane. The protein localises to the cell junction. It localises to the adherens junction. Its subcellular location is the cell projection. Its function is as follows. Unconventional myosin that functions as actin-based motor protein with ATPase activity. Binds to membranes enriched in phosphatidylinositol 4-5-bisphosphate, and can glide along actin filaments when anchored to a lipid bilayer. Generates left-right asymmetry at the level of single cells, organs and the whole body via its interaction with the actin cytoskeleton, both in the embryo and the adult. Normal left-right asymmetry of the larval midgut and hindgut requires expression in the embryonic hindgut epithelium during a critical time period, 10 to 12.75 hours after egg laying. This period corresponds to a late stage of germband retraction, and precedes left-right asymmetric morphogenesis. Expression in segment H1 of the imaginal ring is required at 0 to 24 hours after pupation for changes of cell shape and orientation in the H2 segment, which then gives rise to normal, dextral looping of the adult hindgut. Required during a critical period, 126-132 hours after egg laying, for normal, dextral rotation of the adult male genitalia. Has a double role by promoting dextral rotation in the posterior compartment of segment A8 of the male genital disk, and in repressing sinistral looping in the anterior compartment. This is Unconventional myosin ID from Drosophila melanogaster (Fruit fly).